A 252-amino-acid chain; its full sequence is Cell division protein ZapD (252 aa).

Belongs to the ZapD family. As to quaternary structure, interacts with FtsZ.

It is found in the cytoplasm. Functionally, cell division factor that enhances FtsZ-ring assembly. Directly interacts with FtsZ and promotes bundling of FtsZ protofilaments, with a reduction in FtsZ GTPase activity. The chain is Cell division protein ZapD from Ralstonia nicotianae (strain ATCC BAA-1114 / GMI1000) (Ralstonia solanacearum).